A 471-amino-acid chain; its full sequence is Tryptophanase (471 aa).

N6-acetyllysine occurs at positions 5, 115, and 156. An N6-(pyridoxal phosphate)lysine modification is found at K270. K450 carries the post-translational modification N6-acetyllysine.

The protein belongs to the beta-eliminating lyase family. In terms of assembly, homotetramer. The cofactor is pyridoxal 5'-phosphate.

The catalysed reaction is L-tryptophan + H2O = indole + pyruvate + NH4(+). Its pathway is amino-acid degradation; L-tryptophan degradation via pyruvate pathway; indole and pyruvate from L-tryptophan: step 1/1. This Shigella boydii serotype 18 (strain CDC 3083-94 / BS512) protein is Tryptophanase.